The chain runs to 568 residues: Protein adenylyltransferase SelO, mitochondrial (568 aa).

ATP contacts are provided by Gly120, Gly122, Arg123, Lys144, Asp156, Gly157, Arg208, and Arg215. The active-site Proton acceptor is the Asp287. Asn288 and Asp297 together coordinate Mg(2+). An ATP-binding site is contributed by Asp297.

This sequence belongs to the SELO family. The cofactor is Mg(2+). Post-translationally, forms probably one or more intrachain disulfide bridges.

Its subcellular location is the mitochondrion. It catalyses the reaction L-tyrosyl-[protein] + ATP = O-(5'-adenylyl)-L-tyrosyl-[protein] + diphosphate. Catalyzes the transfer of adenosine 5'-monophosphate (AMP) to Tyr residues of target mitochondrial proteins (AMPylation). Involved in redox homeostasis by regulating the cellular response to oxidative stress. Regulates protein S-glutathionylation levels possibly by AMPylation of deglutathionylation enzymes such as glutaredoxins. The sequence is that of Protein adenylyltransferase SelO, mitochondrial from Schizosaccharomyces pombe (strain 972 / ATCC 24843) (Fission yeast).